A 126-amino-acid polypeptide reads, in one-letter code: Large ribosomal subunit protein bL12 (126 aa).

This sequence belongs to the bacterial ribosomal protein bL12 family. Homodimer. Part of the ribosomal stalk of the 50S ribosomal subunit. Forms a multimeric L10(L12)X complex, where L10 forms an elongated spine to which 2 to 4 L12 dimers bind in a sequential fashion. Binds GTP-bound translation factors.

Its function is as follows. Forms part of the ribosomal stalk which helps the ribosome interact with GTP-bound translation factors. Is thus essential for accurate translation. The sequence is that of Large ribosomal subunit protein bL12 from Rhizorhabdus wittichii (strain DSM 6014 / CCUG 31198 / JCM 15750 / NBRC 105917 / EY 4224 / RW1) (Sphingomonas wittichii).